The chain runs to 102 residues: Small ribosomal subunit protein uS10 (102 aa).

It belongs to the universal ribosomal protein uS10 family. Part of the 30S ribosomal subunit.

Functionally, involved in the binding of tRNA to the ribosomes. The protein is Small ribosomal subunit protein uS10 of Dehalococcoides mccartyi (strain ATCC BAA-2100 / JCM 16839 / KCTC 5957 / BAV1).